The chain runs to 114 residues: Large ribosomal subunit protein uL22 (114 aa).

Belongs to the universal ribosomal protein uL22 family. As to quaternary structure, part of the 50S ribosomal subunit.

In terms of biological role, this protein binds specifically to 23S rRNA; its binding is stimulated by other ribosomal proteins, e.g. L4, L17, and L20. It is important during the early stages of 50S assembly. It makes multiple contacts with different domains of the 23S rRNA in the assembled 50S subunit and ribosome. The globular domain of the protein is located near the polypeptide exit tunnel on the outside of the subunit, while an extended beta-hairpin is found that lines the wall of the exit tunnel in the center of the 70S ribosome. The sequence is that of Large ribosomal subunit protein uL22 from Desulfitobacterium hafniense (strain Y51).